The following is a 182-amino-acid chain: Lipid A acyltransferase PagP (182 aa).

An N-terminal signal peptide occupies residues 1 to 21; the sequence is MTQYFRALAFFLLLVPATAMA. Cys-22 carries the N-palmitoyl cysteine lipid modification. A lipid anchor (S-diacylglycerol cysteine) is attached at Cys-22. Catalysis depends on residues His-55, Asp-98, and Ser-99.

It belongs to the lipid A palmitoyltransferase family. Homodimer.

It is found in the cell outer membrane. It carries out the reaction a lipid A + a 1,2-diacyl-sn-glycero-3-phosphocholine = a hepta-acyl lipid A + a 2-acyl-sn-glycero-3-phosphocholine. It catalyses the reaction a lipid IVA + a 1,2-diacyl-sn-glycero-3-phosphocholine = a lipid IVB + a 2-acyl-sn-glycero-3-phosphocholine. The catalysed reaction is a lipid IIA + a 1,2-diacyl-sn-glycero-3-phosphocholine = a lipid IIB + a 2-acyl-sn-glycero-3-phosphocholine. Its function is as follows. Transfers a fatty acid residue from the sn-1 position of a phospholipid to the N-linked hydroxyfatty acid chain on the proximal unit of lipid A or its precursors. Required for resistance to cationic antimicrobial peptides (CAMPs). Modifications of lipid A with an acyl chain to evade host immune defenses by resisting antibody-mediated complement lysis during respiratory infection. This Bordetella bronchiseptica (strain ATCC BAA-588 / NCTC 13252 / RB50) (Alcaligenes bronchisepticus) protein is Lipid A acyltransferase PagP.